A 107-amino-acid polypeptide reads, in one-letter code: Phosphoribosyl-ATP pyrophosphatase (107 aa).

It belongs to the PRA-PH family.

The protein localises to the cytoplasm. It carries out the reaction 1-(5-phospho-beta-D-ribosyl)-ATP + H2O = 1-(5-phospho-beta-D-ribosyl)-5'-AMP + diphosphate + H(+). It functions in the pathway amino-acid biosynthesis; L-histidine biosynthesis; L-histidine from 5-phospho-alpha-D-ribose 1-diphosphate: step 2/9. This Bacillus cereus (strain G9842) protein is Phosphoribosyl-ATP pyrophosphatase.